Reading from the N-terminus, the 698-residue chain is MAADAHAALAATRNIGIMAHIDAGKTTTTERILFYTGVNYKIGEVHEGGATMDWMEQEQERGITITSAATTCSWRDHTINIIDTPGHVDFTVEVERSLRVLDGAVAVFDAVAGVEPQSETVWKQADRYDVPRIAFVNKMDRVGAEFHRCVDMMVDRLDATPAVIQLPWGVEADFRGVIDLIRMKGLLWHTEDKGASFETVDIPTDHAEAAQEWREKLVETVAENDDELMELYLEGVEPTEEQLMAALRRATVASKINPVLCGSAFKNKGVQPMLDAVVDFLPSPTDIGSVTGHSVGKEDTEVVRRADEDEPFSALAFKIMSDPYVGKLTYIRVYSGRITSGTAVLNSTKDRKERIGRILQMHANHREDRDGVGAGQIVAVVGLKNTTTGDTLCDPNSPVILESMIFPAPVIDVAIEPKTKADQQKLGTAIQRLTEEDPTFQVRTDEETGQTVIAGMGELHLEVFVDRMRREYGVEANVGKPQVAYRETIRRKVEKVDYTHKKQTGGSGQYARVIIDLEPSGGDGGGYEFENKVTGGRIPREFIPSVDAGCQEAMEFGVLAGYPLVDVKVTLRDGQFHEVDSSELAFKIAGSMAFKDAARKADPVILEPMMSVEVTTPEDHMGDVIGDLNSRRGQIQAMDERGGSRIVKALVPLSEMFGYVGDLRSKTSGRASYSMQFDSYAEVPQNVAKDIIAKARGE.

Residues 10 to 285 (AATRNIGIMA…AVVDFLPSPT (276 aa)) enclose the tr-type G domain. GTP is bound by residues 19 to 26 (AHIDAGKT), 83 to 87 (DTPGH), and 137 to 140 (NKMD).

It belongs to the TRAFAC class translation factor GTPase superfamily. Classic translation factor GTPase family. EF-G/EF-2 subfamily.

It is found in the cytoplasm. Catalyzes the GTP-dependent ribosomal translocation step during translation elongation. During this step, the ribosome changes from the pre-translocational (PRE) to the post-translocational (POST) state as the newly formed A-site-bound peptidyl-tRNA and P-site-bound deacylated tRNA move to the P and E sites, respectively. Catalyzes the coordinated movement of the two tRNA molecules, the mRNA and conformational changes in the ribosome. This chain is Elongation factor G, found in Parafrankia sp. (strain EAN1pec).